The primary structure comprises 121 residues: Protein TusC (121 aa).

This sequence belongs to the DsrF/TusC family. Heterohexamer, formed by a dimer of trimers. The hexameric TusBCD complex contains 2 copies each of TusB, TusC and TusD. The TusBCD complex interacts with TusE.

The protein localises to the cytoplasm. Part of a sulfur-relay system required for 2-thiolation of 5-methylaminomethyl-2-thiouridine (mnm(5)s(2)U) at tRNA wobble positions. The protein is Protein TusC of Yersinia pestis bv. Antiqua (strain Antiqua).